We begin with the raw amino-acid sequence, 139 residues long: ATP synthase epsilon chain (139 aa).

The interval 89-110 (EARAEQARAEAEARRREAQSER) is disordered.

Belongs to the ATPase epsilon chain family. In terms of assembly, F-type ATPases have 2 components, CF(1) - the catalytic core - and CF(0) - the membrane proton channel. CF(1) has five subunits: alpha(3), beta(3), gamma(1), delta(1), epsilon(1). CF(0) has three main subunits: a, b and c.

It is found in the cell membrane. Functionally, produces ATP from ADP in the presence of a proton gradient across the membrane. This is ATP synthase epsilon chain from Chloroflexus aurantiacus (strain ATCC 29366 / DSM 635 / J-10-fl).